The chain runs to 343 residues: uncharacterized protein (343 aa).

3 disordered regions span residues 1-25, 62-119, and 169-188; these read MSSK…LSGT, KNIR…DCSD, and NPKI…TKKS. Basic residues predominate over residues 62 to 71; it reads KNIRQFKKSQ. The segment covering 72–81 has biased composition (basic and acidic residues); that stretch reads NKTDTEKSGE. Positions 83 to 107 are enriched in acidic residues; that stretch reads NDSDYSDYSDNSDDVDDLDDVDDLN.

This is an uncharacterized protein from Acanthamoeba polyphaga (Amoeba).